Reading from the N-terminus, the 391-residue chain is Chorismate synthase (391 aa).

R48 lines the NADP(+) pocket. FMN-binding positions include 126 to 128, G286, 301 to 305, and R328; these read RAS and KPTSS.

It belongs to the chorismate synthase family. FMNH2 is required as a cofactor.

It carries out the reaction 5-O-(1-carboxyvinyl)-3-phosphoshikimate = chorismate + phosphate. Its pathway is metabolic intermediate biosynthesis; chorismate biosynthesis; chorismate from D-erythrose 4-phosphate and phosphoenolpyruvate: step 7/7. Functionally, catalyzes the anti-1,4-elimination of the C-3 phosphate and the C-6 proR hydrogen from 5-enolpyruvylshikimate-3-phosphate (EPSP) to yield chorismate, which is the branch point compound that serves as the starting substrate for the three terminal pathways of aromatic amino acid biosynthesis. This reaction introduces a second double bond into the aromatic ring system. The sequence is that of Chorismate synthase from Saccharolobus islandicus (strain L.S.2.15 / Lassen #1) (Sulfolobus islandicus).